Consider the following 547-residue polypeptide: CTP synthase (547 aa).

The tract at residues 1–265 (MARFVFITGG…DQAVLDAFSI (265 aa)) is amidoligase domain. CTP is bound at residue Ser-13. Residue Ser-13 coordinates UTP. Residues 14 to 19 (SLGKGL) and Asp-71 contribute to the ATP site. Positions 71 and 139 each coordinate Mg(2+). Residues 146-148 (DIE), 186-191 (KTKPTQ), and Lys-222 each bind CTP. UTP contacts are provided by residues 186–191 (KTKPTQ) and Lys-222. In terms of domain architecture, Glutamine amidotransferase type-1 spans 291 to 546 (NVAIVGKYTQ…VRAAKEVSRL (256 aa)). Gly-353 is a binding site for L-glutamine. The active-site Nucleophile; for glutamine hydrolysis is Cys-380. L-glutamine contacts are provided by residues 381–384 (LGMQ), Glu-404, and Arg-474. Residues His-519 and Glu-521 contribute to the active site.

It belongs to the CTP synthase family. Homotetramer.

It catalyses the reaction UTP + L-glutamine + ATP + H2O = CTP + L-glutamate + ADP + phosphate + 2 H(+). The enzyme catalyses L-glutamine + H2O = L-glutamate + NH4(+). It carries out the reaction UTP + NH4(+) + ATP = CTP + ADP + phosphate + 2 H(+). Its pathway is pyrimidine metabolism; CTP biosynthesis via de novo pathway; CTP from UDP: step 2/2. Its activity is regulated as follows. Allosterically activated by GTP, when glutamine is the substrate; GTP has no effect on the reaction when ammonia is the substrate. The allosteric effector GTP functions by stabilizing the protein conformation that binds the tetrahedral intermediate(s) formed during glutamine hydrolysis. Inhibited by the product CTP, via allosteric rather than competitive inhibition. Its function is as follows. Catalyzes the ATP-dependent amination of UTP to CTP with either L-glutamine or ammonia as the source of nitrogen. Regulates intracellular CTP levels through interactions with the four ribonucleotide triphosphates. This is CTP synthase from Dinoroseobacter shibae (strain DSM 16493 / NCIMB 14021 / DFL 12).